We begin with the raw amino-acid sequence, 572 residues long: Phosphoglucomutase-1 (572 aa).

Residues threonine 23, arginine 27, 126-127 (SH), and lysine 140 contribute to the substrate site. Serine 126 serves as the catalytic Phosphoserine intermediate. A Mg(2+)-binding site is contributed by serine 126. Mg(2+) contacts are provided by aspartate 308, aspartate 310, and aspartate 312. Substrate contacts are provided by residues 312–313 (DR), threonine 373, 392–394 (EES), lysine 405, and arginine 527.

The protein belongs to the phosphohexose mutase family. Mg(2+) serves as cofactor. Post-translationally, phosphorylated via a calcium-dependent protein kinase. Very rapidly (within 80 ms) dephosphorylated during triggered trichocyst exocytosis. In terms of processing, O-glycosylated with a short chain of mannose residues.

The protein localises to the cytoplasm. The enzyme catalyses alpha-D-glucose 1-phosphate = alpha-D-glucose 6-phosphate. May be involved in membrane fusion in exocytosis. This Paramecium tetraurelia protein is Phosphoglucomutase-1 (pp63-1).